We begin with the raw amino-acid sequence, 175 residues long: Zinc finger A20 and AN1 domain-containing stress-associated protein 7 (175 aa).

Residues 13 to 47 (PTEPKLCDNGCGFFGSPSNMNLCSKCYRSLRAEED) form an A20-type zinc finger. Zn(2+) contacts are provided by Cys-19, Cys-23, Cys-35, Cys-38, Cys-116, Cys-119, Cys-130, Cys-132, Cys-137, His-140, His-146, and Cys-148. An AN1-type zinc finger spans residues 110-156 (VRPNNRCFSCNKKVGVMGFKCKCGSTFCGSHRYPEKHECSFDFKEVG).

May be involved in environmental stress response. This is Zinc finger A20 and AN1 domain-containing stress-associated protein 7 (SAP7) from Arabidopsis thaliana (Mouse-ear cress).